We begin with the raw amino-acid sequence, 755 residues long: Anaphase-promoting complex subunit 5 (755 aa).

Ser-195 carries the phosphoserine modification. TPR repeat units follow at residues 209 to 249 (QKQA…FNPD), 250 to 300 (FAEA…GRSL), 301 to 337 (RYAALNLAALHCRFGHYQQAELALQEAIRIAQESNDH), 338 to 378 (VCLQ…YLAS), 379 to 418 (LGIQSLVQQRAFAGKTANKLMDALKDSDLLHWKHSLSELI), 419 to 466 (DISI…TESF), 467 to 500 (AVALCHLAELHAEQGCFAAASEVLKHLKERFPPN), 501 to 540 (SQHAQLWMLCDQKIQFDRAMNDGKYHLADSLVTGITALNS), 541 to 580 (IEGVYRKAVVLQAQNQMSEAHKLLQKLLVHCQKLKNTEMV), 581 to 620 (ISVLLSVAELYWRSSSPTIALPMLLQALALSKEYRLQYLA), 621 to 660 (SETVLNLAFAQLILGIPEQALSLLHMAIEPILADGAILDK), 661 to 696 (GRAMFLVAKCQVASAASYDQPKKAEALEAAIENLNE), and 697 to 736 (AKNYFAKVDCKERIRDVVYFQARLYHTLGKTQERNRCAML). The residue at position 232 (Thr-232) is a Phosphothreonine.

Belongs to the APC5 family. In terms of assembly, the mammalian APC/C is composed at least of 14 distinct subunits ANAPC1, ANAPC2, CDC27/APC3, ANAPC4, ANAPC5, CDC16/APC6, ANAPC7, CDC23/APC8, ANAPC10, ANAPC11, CDC26/APC12, ANAPC13, ANAPC15 and ANAPC16 that assemble into a complex of at least 19 chains with a combined molecular mass of around 1.2 MDa; APC/C interacts with FZR1 and FBXO5.

The protein resides in the nucleus. It is found in the cytoplasm. The protein localises to the cytoskeleton. It localises to the spindle. Its pathway is protein modification; protein ubiquitination. Its function is as follows. Component of the anaphase promoting complex/cyclosome (APC/C), a cell cycle-regulated E3 ubiquitin ligase that controls progression through mitosis and the G1 phase of the cell cycle. The APC/C complex acts by mediating ubiquitination and subsequent degradation of target proteins: it mainly mediates the formation of 'Lys-11'-linked polyubiquitin chains and, to a lower extent, the formation of 'Lys-48'- and 'Lys-63'-linked polyubiquitin chains. The APC/C complex catalyzes assembly of branched 'Lys-11'-/'Lys-48'-linked branched ubiquitin chains on target proteins. The chain is Anaphase-promoting complex subunit 5 (ANAPC5) from Homo sapiens (Human).